Consider the following 276-residue polypeptide: MWNNHGGFDGGYGGSGMGGGGGYMQSPGGFGSPAPTQGEKKSRSRSQQIVPCTVSQLLSATQNDEVFRIGEAELSQVTIVGIVRHAEKAPTNILYKVDDMTAAPMDVRQWVDTDEASCENMVVPPGSYVKVAGHLRSFQNKKSVVAFKIAPVEDMNEFVSHMLEVVHAHMAMNSQGAPSGGGSTVALSTPGRVGDSGRAFSGGNDNPTNGLTPHQSQILSLIKSCKGNEGMAFEELKNRLHGMNVNTIRQAVEFLSNEGHIYSTIDDEHYKCTDGD.

The span at 19–31 shows a compositional bias: gly residues; it reads GGGGYMQSPGGFG. The segment at 19-47 is disordered; it reads GGGGYMQSPGGFGSPAPTQGEKKSRSRSQ. The OB DNA-binding region spans 77–151; it reads VTIVGIVRHA…KSVVAFKIAP (75 aa).

This sequence belongs to the replication factor A protein 2 family. Component of the replication protein A complex (RPA/RP-A), a heterotrimeric complex composed of RPA1, RPA2 and RPA3. In terms of processing, differentially phosphorylated throughout the cell cycle, becoming phosphorylated at the G1-S transition and dephosphorylated in late mitosis. Phosphorylation increases upon replication fork stalling.

Its subcellular location is the nucleus. The protein resides in the PML body. Functionally, as part of the heterotrimeric replication protein A complex (RPA/RP-A), binds and stabilizes single-stranded DNA intermediates, that form during DNA replication or upon DNA stress. It prevents their reannealing and in parallel, recruits and activates different proteins and complexes involved in DNA metabolism. Thereby, it plays an essential role both in DNA replication and the cellular response to DNA damage. The polypeptide is Replication protein A 32 kDa subunit-A (rpa2-a) (Xenopus laevis (African clawed frog)).